The primary structure comprises 341 residues: Phosphate acyltransferase (341 aa).

Belongs to the PlsX family. As to quaternary structure, homodimer. Probably interacts with PlsY.

The protein localises to the cytoplasm. The catalysed reaction is a fatty acyl-[ACP] + phosphate = an acyl phosphate + holo-[ACP]. The protein operates within lipid metabolism; phospholipid metabolism. Catalyzes the reversible formation of acyl-phosphate (acyl-PO(4)) from acyl-[acyl-carrier-protein] (acyl-ACP). This enzyme utilizes acyl-ACP as fatty acyl donor, but not acyl-CoA. In Chlorobaculum parvum (strain DSM 263 / NCIMB 8327) (Chlorobium vibrioforme subsp. thiosulfatophilum), this protein is Phosphate acyltransferase.